Here is a 70-residue protein sequence, read N- to C-terminus: Small, acid-soluble spore protein 1 (70 aa).

It belongs to the alpha/beta-type SASP family.

Functionally, SASP are bound to spore DNA. They are double-stranded DNA-binding proteins that cause DNA to change to an a-like conformation. They protect the DNA backbone from chemical and enzymatic cleavage and are thus involved in dormant spore's high resistance to UV light. The protein is Small, acid-soluble spore protein 1 of Bacillus subtilis.